Reading from the N-terminus, the 354-residue chain is Guanine nucleotide-binding protein G(i) subunit alpha-3 (354 aa).

The N-myristoyl glycine moiety is linked to residue Gly-2. A lipid anchor (S-palmitoyl cysteine) is attached at Cys-3. The 323-residue stretch at 32–354 (KEVKLLLLGA…KNNLKECGLY (323 aa)) folds into the G-alpha domain. The G1 motif stretch occupies residues 35–48 (KLLLLGAGESGKST). GTP contacts are provided by Gly-42, Glu-43, Ser-44, Gly-45, Lys-46, Ser-47, Thr-48, Asp-150, Ser-151, Leu-175, Arg-176, Thr-177, Arg-178, Val-179, Lys-180, Thr-181, Val-201, Gly-203, Asn-269, Lys-270, Asp-272, Leu-273, Cys-325, Ala-326, and Thr-327. Ser-47 is a binding site for Mg(2+). The tract at residues 173 to 181 (DVLRTRVKT) is G2 motif. Thr-181 contacts Mg(2+). The G3 motif stretch occupies residues 196–205 (FKMFDVGGQR). Positions 265 to 272 (ILFLNKKD) are G4 motif. Positions 324–329 (TCATDT) are G5 motif.

The protein belongs to the G-alpha family. G(i/o/t/z) subfamily. As to quaternary structure, heterotrimeric G proteins are composed of 3 units; alpha, beta and gamma. The alpha subunit contains the guanine nucleotide binding site. GTP binding causes dissociation of the heterotrimer, liberating the individual subunits so that they can interact with downstream effector proteins. Forms a complex with CCDC88A/GIV and EGFR which leads to enhanced EGFR signaling and triggering of cell migration; ligand stimulation is required for recruitment of GNAI3 to the complex. Interacts (inactive GDP-bound form) with CCDC88A/GIV (via GBA motif); the interaction leads to activation of GNAI3. Interacts (inactive GDP-bound form) with CCDC88C/DAPLE (via GBA motif); the interaction leads to activation of GNAI3. Interacts (inactive GDP-bound form) with NUCB1 (via GBA motif) and NUCB2 (via GBA motif); the interaction leads to activation of GNAI3. Interacts (inactive GDP-bound form) with PLCD4 (via GBA motif); the interaction leads to activation of GNAI3. Interacts with INSR; the interaction is probably mediated by CCDC88A/GIV. Interacts with GPSM1. Interacts (GDP-bound form) with GPSM2 (via GoLoco domains). Does not interact with RGS2. Interacts with RGS8 and RGS10; this strongly enhances the intrinsic GTPase activity. Interacts with RGS16; this strongly enhances the intrinsic GTPase activity. Interacts with RGS12. Interacts (via active GTP- or inactive GDP-bound form) with RGS14. Interacts (via active GTP-bound form) with TRPC5 (via ANK repeats) in a homotetrameric ion channel; the interaction is direct and activates the channel activity.

It localises to the cytoplasm. Its subcellular location is the cell membrane. The protein resides in the cytoskeleton. The protein localises to the microtubule organizing center. It is found in the centrosome. Heterotrimeric guanine nucleotide-binding proteins (G proteins) function as transducers downstream of G protein-coupled receptors (GPCRs) in numerous signaling cascades. The alpha chain contains the guanine nucleotide binding site and alternates between an active, GTP-bound state and an inactive, GDP-bound state. Signaling by an activated GPCR promotes GDP release and GTP binding. The alpha subunit has a low GTPase activity that converts bound GTP to GDP, thereby terminating the signal. Both GDP release and GTP hydrolysis are modulated by numerous regulatory proteins. Signaling is mediated via effector proteins, such as adenylate cyclase. Inhibits adenylate cyclase activity, leading to decreased intracellular cAMP levels. Stimulates the activity of receptor-regulated K(+) channels. The active GTP-bound form prevents the association of RGS14 with centrosomes and is required for the translocation of RGS14 from the cytoplasm to the plasma membrane. May play a role in cell division. The active GTP-bound form activates the calcium permeant TRPC5 ion channels. In Cricetulus griseus (Chinese hamster), this protein is Guanine nucleotide-binding protein G(i) subunit alpha-3 (GNAI3).